Reading from the N-terminus, the 255-residue chain is Triosephosphate isomerase (255 aa).

Substrate is bound at residue 9–11; the sequence is NWK. The active-site Electrophile is the His95. The Proton acceptor role is filled by Glu167. Substrate-binding positions include Gly173, Ser212, and 233–234; that span reads GG.

Belongs to the triosephosphate isomerase family. In terms of assembly, homodimer.

It localises to the cytoplasm. The catalysed reaction is D-glyceraldehyde 3-phosphate = dihydroxyacetone phosphate. The protein operates within carbohydrate biosynthesis; gluconeogenesis. It participates in carbohydrate degradation; glycolysis; D-glyceraldehyde 3-phosphate from glycerone phosphate: step 1/1. In terms of biological role, involved in the gluconeogenesis. Catalyzes stereospecifically the conversion of dihydroxyacetone phosphate (DHAP) to D-glyceraldehyde-3-phosphate (G3P). This Salmonella agona (strain SL483) protein is Triosephosphate isomerase.